The chain runs to 295 residues: Tyrosine recombinase XerC (295 aa).

A Core-binding (CB) domain is found at 1 to 85 (MQTYLQKYWN…ALRQFLAFLV (85 aa)). The Tyr recombinase domain occupies 106–285 (HLPKNINAEQ…NFQHLAEVYD (180 aa)). Residues Arg145, Lys169, His237, Arg240, and His263 contribute to the active site. The O-(3'-phospho-DNA)-tyrosine intermediate role is filled by Tyr272.

The protein belongs to the 'phage' integrase family. XerC subfamily. As to quaternary structure, forms a cyclic heterotetrameric complex composed of two molecules of XerC and two molecules of XerD.

The protein localises to the cytoplasm. Site-specific tyrosine recombinase, which acts by catalyzing the cutting and rejoining of the recombining DNA molecules. The XerC-XerD complex is essential to convert dimers of the bacterial chromosome into monomers to permit their segregation at cell division. It also contributes to the segregational stability of plasmids. The sequence is that of Tyrosine recombinase XerC from Mannheimia succiniciproducens (strain KCTC 0769BP / MBEL55E).